We begin with the raw amino-acid sequence, 88 residues long: EMBRYO SURROUNDING FACTOR 1-like protein 7 (88 aa).

Residues 1 to 22 (MKSSHIALICIVMFSLFALHES) form the signal peptide. 4 cysteine pairs are disulfide-bonded: Cys41–Cys57, Cys46–Cys85, Cys55–Cys81, and Cys58–Cys68.

The protein belongs to the MEG family. In terms of tissue distribution, expressed in leaves and flowers.

In Arabidopsis thaliana (Mouse-ear cress), this protein is EMBRYO SURROUNDING FACTOR 1-like protein 7 (ESFL7).